We begin with the raw amino-acid sequence, 249 residues long: Probable transcriptional regulatory protein Minf_0651 (249 aa).

This sequence belongs to the TACO1 family.

The protein localises to the cytoplasm. This is Probable transcriptional regulatory protein Minf_0651 from Methylacidiphilum infernorum (isolate V4) (Methylokorus infernorum (strain V4)).